A 472-amino-acid chain; its full sequence is Ribulose bisphosphate carboxylase large chain (472 aa).

N120 and T170 together coordinate substrate. K172 serves as the catalytic Proton acceptor. K174 is a substrate binding site. Residues K198, D200, and E201 each contribute to the Mg(2+) site. K198 carries the N6-carboxylysine modification. Catalysis depends on H291, which acts as the Proton acceptor. Residues R292, H324, and S376 each coordinate substrate.

This sequence belongs to the RuBisCO large chain family. Type I subfamily. Heterohexadecamer of 8 large chains and 8 small chains. The cofactor is Mg(2+).

It is found in the carboxysome. It carries out the reaction 2 (2R)-3-phosphoglycerate + 2 H(+) = D-ribulose 1,5-bisphosphate + CO2 + H2O. It catalyses the reaction D-ribulose 1,5-bisphosphate + O2 = 2-phosphoglycolate + (2R)-3-phosphoglycerate + 2 H(+). In terms of biological role, ruBisCO catalyzes two reactions: the carboxylation of D-ribulose 1,5-bisphosphate, the primary event in carbon dioxide fixation, as well as the oxidative fragmentation of the pentose substrate in the photorespiration process. Both reactions occur simultaneously and in competition at the same active site. In Gloeothece citriformis (strain PCC 7424) (Cyanothece sp. (strain PCC 7424)), this protein is Ribulose bisphosphate carboxylase large chain.